A 173-amino-acid chain; its full sequence is Photosystem I assembly protein Ycf3 (173 aa).

3 TPR repeats span residues 35–68 (AFAY…EDDP), 72–105 (SYIL…NPRM), and 120–153 (GEKA…APNN).

The protein belongs to the Ycf3 family.

The protein resides in the cellular thylakoid membrane. In terms of biological role, essential for the assembly of the photosystem I (PSI) complex. May act as a chaperone-like factor to guide the assembly of the PSI subunits. In Picosynechococcus sp. (strain ATCC 27264 / PCC 7002 / PR-6) (Agmenellum quadruplicatum), this protein is Photosystem I assembly protein Ycf3.